Here is a 179-residue protein sequence, read N- to C-terminus: Inner membrane-spanning protein YciB (179 aa).

5 helical membrane-spanning segments follow: residues phenylalanine 3–tyrosine 23, asparagine 49–glutamine 69, tryptophan 76–phenylalanine 96, leucine 119–tyrosine 139, and phenylalanine 149–leucine 169.

The protein belongs to the YciB family.

It is found in the cell inner membrane. Plays a role in cell envelope biogenesis, maintenance of cell envelope integrity and membrane homeostasis. This chain is Inner membrane-spanning protein YciB, found in Methylobacillus flagellatus (strain ATCC 51484 / DSM 6875 / VKM B-1610 / KT).